The chain runs to 109 residues: MSAQPVDIQIFGRSLRVNCPPEQQEALNQAAEDLNQRLQDLKVRTRVTNTEQLVFIAALNVCHELAQERGKTRDYASNMEQRIRMLQQTIEQALLEQGKITDRQGTQFE.

The stretch at Pro-21 to Lys-99 forms a coiled coil.

It belongs to the ZapA family. Type 1 subfamily. In terms of assembly, homodimer. Interacts with FtsZ.

The protein localises to the cytoplasm. Functionally, activator of cell division through the inhibition of FtsZ GTPase activity, therefore promoting FtsZ assembly into bundles of protofilaments necessary for the formation of the division Z ring. It is recruited early at mid-cell but it is not essential for cell division. The sequence is that of Cell division protein ZapA from Pectobacterium atrosepticum (strain SCRI 1043 / ATCC BAA-672) (Erwinia carotovora subsp. atroseptica).